The chain runs to 797 residues: Protocadherin-3 (797 aa).

The N-terminal stretch at Met-1 to Ala-30 is a signal peptide. At Ile-31–Leu-691 the chain is on the extracellular side. 5 consecutive Cadherin domains span residues Met-35–Phe-133, Met-138–Phe-242, Tyr-247–Leu-346, Leu-351–Phe-450, and Tyr-455–Val-560. Asn-169, Asn-276, and Asn-417 each carry an N-linked (GlcNAc...) asparagine glycan. Residue Asn-566 is glycosylated (N-linked (GlcNAc...) asparagine). The Cadherin 6 domain maps to Ala-567–Leu-670. Residues Val-692 to Val-712 traverse the membrane as a helical segment. The Cytoplasmic segment spans residues Arg-713–Tyr-797.

As to expression, expressed in brain.

The protein localises to the cell membrane. Functionally, potential calcium-dependent cell-adhesion protein. May be involved in the establishment and maintenance of specific neuronal connections in the brain. The chain is Protocadherin-3 (Pcdh3) from Rattus norvegicus (Rat).